Here is a 608-residue protein sequence, read N- to C-terminus: UvrABC system protein C (608 aa).

A GIY-YIG domain is found at 13–91 (HDPGVYRMFD…IKTFQPRYNV (79 aa)). The UVR domain occupies 201–236 (QQVLDHLIGKMERASRALNFEEAARYRDQIQAVRSV).

Belongs to the UvrC family. In terms of assembly, interacts with UvrB in an incision complex.

It is found in the cytoplasm. The UvrABC repair system catalyzes the recognition and processing of DNA lesions. UvrC both incises the 5' and 3' sides of the lesion. The N-terminal half is responsible for the 3' incision and the C-terminal half is responsible for the 5' incision. The protein is UvrABC system protein C of Mannheimia succiniciproducens (strain KCTC 0769BP / MBEL55E).